Here is a 367-residue protein sequence, read N- to C-terminus: Splicing factor U2AF-associated protein 2 (367 aa).

Positions 36–104 (YDPNSLKMNK…SKSENSEASP (69 aa)) are disordered. Residues 61–78 (TEGKESSNGEDRHTKRLY) are compositionally biased toward basic and acidic residues. RRM domains follow at residues 112-193 (VYIQ…KMRV) and 268-329 (LLID…VVEA).

It belongs to the HTATSF1 family. Interacts with the U2AF large and U2AF small subunits.

In terms of biological role, has a role in pre-mRNA splicing. The polypeptide is Splicing factor U2AF-associated protein 2 (uap2) (Schizosaccharomyces pombe (strain 972 / ATCC 24843) (Fission yeast)).